A 385-amino-acid polypeptide reads, in one-letter code: Nod factor hydrolase protein 1 (385 aa).

The first 21 residues, 1–21 (MANFLKLKQFLTLVLILLALA), serve as a signal peptide directing secretion. The 350-residue stretch at 36–385 (RVKGIYWIEN…TASKAWRPES (350 aa)) folds into the GH18 domain. N-linked (GlcNAc...) asparagine glycans are attached at residues Asn115 and Asn134. Glu153 acts as the Proton donor in catalysis. 2 N-linked (GlcNAc...) asparagine glycosylation sites follow: Asn233 and Asn247.

This sequence belongs to the glycosyl hydrolase 18 family. Chitinase class V subfamily.

In terms of biological role, symbiotic enzyme that hydrolytically inactivates Nod factors (NFs) with a C16:2 acyl chain produced by the microsymbiont Sinorhizobium meliloti. NFs are lipo-chitooligosaccharide signaling molecules produced by nitrogen-fixing rhizobia to initiate nodulation (symbiosis) on the roots of legumes. Controls NF hydrolysis at the stage of root hair infection. Involved in the regulation of growth and branching of mature nodules. Modulates NF levels and signaling to complete transition of infected nodules to functional nitrogen-fixing organs. Lacks chitinase activity in vitro toward glycol chitin, carboxymethyl-chitin, colloidal chitin, and the chitin oligosaccharides (N-acetylglucosamine) (GlcNAc)6 and (GlcNAc)5. The chain is Nod factor hydrolase protein 1 from Medicago truncatula (Barrel medic).